The chain runs to 226 residues: ATP synthase F(0) complex subunit a (226 aa).

6 consecutive transmembrane segments (helical) span residues 6–26 (FASF…IVLF), 68–88 (WTLM…LGLL), 97–117 (QLSM…ITGF), 138–158 (IPML…ALAV), 164–184 (ITAG…LMSI), and 200–222 (TILE…SLYL).

This sequence belongs to the ATPase A chain family. As to quaternary structure, component of the ATP synthase complex composed at least of ATP5F1A/subunit alpha, ATP5F1B/subunit beta, ATP5MC1/subunit c (homooctomer), MT-ATP6/subunit a, MT-ATP8/subunit 8, ATP5ME/subunit e, ATP5MF/subunit f, ATP5MG/subunit g, ATP5MK/subunit k, ATP5MJ/subunit j, ATP5F1C/subunit gamma, ATP5F1D/subunit delta, ATP5F1E/subunit epsilon, ATP5PF/subunit F6, ATP5PB/subunit b, ATP5PD/subunit d, ATP5PO/subunit OSCP. ATP synthase complex consists of a soluble F(1) head domain (subunits alpha(3) and beta(3)) - the catalytic core - and a membrane F(0) domain - the membrane proton channel (subunits c, a, 8, e, f, g, k and j). These two domains are linked by a central stalk (subunits gamma, delta, and epsilon) rotating inside the F1 region and a stationary peripheral stalk (subunits F6, b, d, and OSCP). Interacts with DNAJC30; interaction is direct.

The protein localises to the mitochondrion inner membrane. The catalysed reaction is H(+)(in) = H(+)(out). Subunit a, of the mitochondrial membrane ATP synthase complex (F(1)F(0) ATP synthase or Complex V) that produces ATP from ADP in the presence of a proton gradient across the membrane which is generated by electron transport complexes of the respiratory chain. ATP synthase complex consist of a soluble F(1) head domain - the catalytic core - and a membrane F(1) domain - the membrane proton channel. These two domains are linked by a central stalk rotating inside the F(1) region and a stationary peripheral stalk. During catalysis, ATP synthesis in the catalytic domain of F(1) is coupled via a rotary mechanism of the central stalk subunits to proton translocation. With the subunit c (ATP5MC1), forms the proton-conducting channel in the F(0) domain, that contains two crucial half-channels (inlet and outlet) that facilitate proton movement from the mitochondrial intermembrane space (IMS) into the matrix. Protons are taken up via the inlet half-channel and released through the outlet half-channel, following a Grotthuss mechanism. The polypeptide is ATP synthase F(0) complex subunit a (Bos mutus grunniens (Wild yak)).